The sequence spans 145 residues: Deoxyuridine 5'-triphosphate nucleotidohydrolase (145 aa).

Residues 62-64 (RSG), Asn-75, 79-81 (TVD), and Lys-89 each bind substrate.

The protein belongs to the dUTPase family. Mg(2+) is required as a cofactor.

The catalysed reaction is dUTP + H2O = dUMP + diphosphate + H(+). Its pathway is pyrimidine metabolism; dUMP biosynthesis; dUMP from dCTP (dUTP route): step 2/2. Functionally, this enzyme is involved in nucleotide metabolism: it produces dUMP, the immediate precursor of thymidine nucleotides and it decreases the intracellular concentration of dUTP so that uracil cannot be incorporated into DNA. This chain is Deoxyuridine 5'-triphosphate nucleotidohydrolase, found in Helicobacter pylori (strain J99 / ATCC 700824) (Campylobacter pylori J99).